The sequence spans 541 residues: Long-chain-fatty-acid--CoA ligase (541 aa).

Position 184 (T184) interacts with Mg(2+). Residues V231 and W234 each contribute to the ATP site. Residues G302, Q322, G323, and T327 each contribute to the tetradecanoyl-AMP site. ATP is bound by residues G323 and T327. Residue E328 participates in Mg(2+) binding. D418, K435, K439, and W444 together coordinate ATP. The tetradecanoyl-AMP site is built by D418, K435, and K439.

The protein belongs to the ATP-dependent AMP-binding enzyme family. As to quaternary structure, forms a domain swapped homodimer. Mg(2+) serves as cofactor.

The enzyme catalyses a long-chain fatty acid + ATP + CoA = a long-chain fatty acyl-CoA + AMP + diphosphate. The catalysed reaction is tetradecanoate + ATP + CoA = tetradecanoyl-CoA + AMP + diphosphate. It catalyses the reaction hexadecanoate + ATP + CoA = hexadecanoyl-CoA + AMP + diphosphate. It participates in lipid metabolism; fatty acid metabolism. In terms of biological role, catalyzes the esterification of a number of long chain fatty acids with CoA, resulting in the formation of long-chain fatty acyl-CoA. Myristate (C14) is the most efficiently processed fatty acid, followed by palmitate (C16). Also catalyzes the esterification of stearate (C18) and laurate (C12), but at lower efficiency. Does not catalyze the esterification of the unsaturated fatty acids mysteroleic and palmitoleic acids in vitro. The sequence is that of Long-chain-fatty-acid--CoA ligase from Thermus thermophilus (strain ATCC 27634 / DSM 579 / HB8).